Reading from the N-terminus, the 300-residue chain is Sodium/potassium/calcium exchanger 1 (300 aa).

The segment at 1-251 (DPGSQGVGAE…ENEQPLSLEW (251 aa)) is disordered. Composition is skewed to acidic residues over residues 92–102 (GEVEGDEDEGE), 109–119 (GEVEGDEDEGE), 126–136 (GEVEGDEDEGE), 158–175 (GEVE…DEGE), and 215–244 (GDSE…EENE). A helical membrane pass occupies residues 259-275 (AIYLFLLPIVFPLWLTV).

Belongs to the Ca(2+):cation antiporter (CaCA) (TC 2.A.19) family. SLC24A subfamily. The uncleaved signal sequence is required for efficient membrane targeting and proper membrane integration and topology.

It is found in the cell membrane. It catalyses the reaction Ca(2+)(out) + K(+)(out) + 4 Na(+)(in) = Ca(2+)(in) + K(+)(in) + 4 Na(+)(out). Calcium, potassium:sodium antiporter that transports 1 Ca(2+) and 1 K(+) in exchange for 4 Na(+). Critical component of the visual transduction cascade, controlling the calcium concentration of outer segments during light and darkness. Light causes a rapid lowering of cytosolic free calcium in the outer segment of both retinal rod and cone photoreceptors and the light-induced lowering of calcium is caused by extrusion via this protein which plays a key role in the process of light adaptation. In Bison bison (American bison), this protein is Sodium/potassium/calcium exchanger 1 (SLC24A1).